The primary structure comprises 855 residues: Probable inactive ATP-dependent zinc metalloprotease FTSHI 4, chloroplastic (855 aa).

The N-terminal 78 residues, 1–78 (MTFYISSSLT…SFESTESSVS (78 aa)), are a transit peptide targeting the chloroplast. A helical transmembrane segment spans residues 242–262 (VATFVVWSMRLALFVSLYVWI). ATP is bound at residue 356–363 (GPPGTGKT).

This sequence belongs to the AAA ATPase family. Homooligomer. Interacts with FtsHi2. As to expression, ubiquitous but preferentially expressed in young leaves.

It localises to the plastid. The protein localises to the chloroplast thylakoid membrane. Functionally, functions in chloroplast biogenesis and chloroplast division. Required for plastid development during embryogenesis. Might be involved in chaperone functions or play a structural role in the thylakoid FtsH complex. In Arabidopsis thaliana (Mouse-ear cress), this protein is Probable inactive ATP-dependent zinc metalloprotease FTSHI 4, chloroplastic.